The following is a 451-amino-acid chain: F-box/kelch-repeat protein At1g74510 (451 aa).

The F-box domain maps to 93-139 (SSPVTRLDQNALLNCLAHCSLSDFGSIASTNRTFRSLIKDSELYRLR). 5 Kelch repeats span residues 137–188 (RLRR…KESL), 193–236 (ELLV…SLGE), 237–284 (IAVI…FMDG), 286–333 (FYCI…DQAK), and 349–395 (AVVK…GMAF).

The sequence is that of F-box/kelch-repeat protein At1g74510 from Arabidopsis thaliana (Mouse-ear cress).